We begin with the raw amino-acid sequence, 344 residues long: Arginine N-succinyltransferase (344 aa).

Leucine 125 is a succinyl-CoA binding site. Residue histidine 229 is the Proton donor of the active site.

It belongs to the arginine N-succinyltransferase family.

It catalyses the reaction succinyl-CoA + L-arginine = N(2)-succinyl-L-arginine + CoA + H(+). It functions in the pathway amino-acid degradation; L-arginine degradation via AST pathway; L-glutamate and succinate from L-arginine: step 1/5. Its function is as follows. Catalyzes the transfer of succinyl-CoA to arginine to produce N(2)-succinylarginine. This Escherichia coli O6:H1 (strain CFT073 / ATCC 700928 / UPEC) protein is Arginine N-succinyltransferase.